A 432-amino-acid polypeptide reads, in one-letter code: Golgin subfamily A member 6-like protein 9 (432 aa).

The span at 1 to 11 shows a compositional bias: pro residues; that stretch reads MWPQPRLPPHP. Disordered stretches follow at residues 1–77 and 349–411; these read MWPQ…YGEG and KELE…AGGA. Polar residues predominate over residues 51–62; it reads NGSSPDTFTSGG. Residues 157 to 354 adopt a coiled-coil conformation; the sequence is SKMEQLQDET…EQQVKELEKS (198 aa). The segment covering 349 to 362 has biased composition (basic and acidic residues); that stretch reads KELEKSGGAEEPRG. Positions 366 to 381 are enriched in low complexity; that stretch reads AAAARPVAGAPVPQGA.

The protein belongs to the GOLGA6 family.

This Homo sapiens (Human) protein is Golgin subfamily A member 6-like protein 9.